A 437-amino-acid polypeptide reads, in one-letter code: Gamma-glutamyl phosphate reductase (437 aa).

Belongs to the gamma-glutamyl phosphate reductase family.

Its subcellular location is the cytoplasm. The enzyme catalyses L-glutamate 5-semialdehyde + phosphate + NADP(+) = L-glutamyl 5-phosphate + NADPH + H(+). Its pathway is amino-acid biosynthesis; L-proline biosynthesis; L-glutamate 5-semialdehyde from L-glutamate: step 2/2. Its function is as follows. Catalyzes the NADPH-dependent reduction of L-glutamate 5-phosphate into L-glutamate 5-semialdehyde and phosphate. The product spontaneously undergoes cyclization to form 1-pyrroline-5-carboxylate. The chain is Gamma-glutamyl phosphate reductase from Synechococcus sp. (strain CC9902).